The sequence spans 607 residues: Glutamine--fructose-6-phosphate aminotransferase [isomerizing] (607 aa).

C2 functions as the Nucleophile; for GATase activity in the catalytic mechanism. Residues 2–217 (CGIIGIIGND…DGDWAVLTRN (216 aa)) enclose the Glutamine amidotransferase type-2 domain. SIS domains lie at 283-422 (IGID…ARGA) and 455-597 (VCHD…VDQP). K602 acts as the For Fru-6P isomerization activity in catalysis.

Homodimer.

The protein localises to the cytoplasm. The enzyme catalyses D-fructose 6-phosphate + L-glutamine = D-glucosamine 6-phosphate + L-glutamate. Catalyzes the first step in hexosamine metabolism, converting fructose-6P into glucosamine-6P using glutamine as a nitrogen source. The sequence is that of Glutamine--fructose-6-phosphate aminotransferase [isomerizing] from Brucella melitensis biotype 1 (strain ATCC 23456 / CCUG 17765 / NCTC 10094 / 16M).